The chain runs to 500 residues: Cytochrome P450 2D15 (500 aa).

Position 446 (cysteine 446) interacts with heme.

It belongs to the cytochrome P450 family. Heme is required as a cofactor. As to expression, liver. Also detected in several other tissues.

The protein resides in the endoplasmic reticulum membrane. It is found in the microsome membrane. The enzyme catalyses an organic molecule + reduced [NADPH--hemoprotein reductase] + O2 = an alcohol + oxidized [NADPH--hemoprotein reductase] + H2O + H(+). High activity for the hydroxylation of bunitrolol and imipramine; low activity on debrisoquine. The sequence is that of Cytochrome P450 2D15 (CYP2D15) from Canis lupus familiaris (Dog).